We begin with the raw amino-acid sequence, 182 residues long: uncharacterized protein (182 aa).

Helical transmembrane passes span 29–49 and 63–83; these read IISG…AGLP and FYFP…MLTL.

Its subcellular location is the cell membrane. This is an uncharacterized protein from Ureaplasma parvum serovar 3 (strain ATCC 700970).